A 131-amino-acid chain; its full sequence is Agouti-related protein (131 aa).

Residues 1 to 20 (MLTAMLLSCVLLLALPPTLG) form the signal peptide. Positions 21–81 (VQMGVAPLKG…VLDPQNRESR (61 aa)) are excised as a propeptide. 5 disulfide bridges follow: C86–C101, C93–C107, C100–C118, C104–C128, and C109–C116. One can recognise an Agouti domain in the interval 86-128 (CVRLHESCLGQQVPCCDPCATCYCRFFNAFCYCRKLGTATNLC). Residues 110–112 (RFF) form an interaction with melanocortin receptors region.

As to quaternary structure, interacts with melanocortin receptors MC3R, MC4R and MC5R. Expressed in arcuate nucleus and median eminence, adrenal gland (medulla), hypothalamus, testis, and lung.

It is found in the secreted. The protein localises to the golgi apparatus lumen. Plays a role in weight homeostasis. Involved in the control of feeding behavior through the central melanocortin system. Acts as alpha melanocyte-stimulating hormone antagonist by inhibiting cAMP production mediated by stimulation of melanocortin receptors within the hypothalamus and adrenal gland. Has very low activity with MC5R. Is an inverse agonist for MC3R and MC4R being able to suppress their constitutive activity. It promotes MC3R and MC4R endocytosis in an arrestin-dependent manner. The polypeptide is Agouti-related protein (Agrp) (Mus musculus (Mouse)).